Reading from the N-terminus, the 125-residue chain is Small ribosomal subunit protein uS12 (125 aa).

Asp-89 carries the post-translational modification 3-methylthioaspartic acid.

The protein belongs to the universal ribosomal protein uS12 family. In terms of assembly, part of the 30S ribosomal subunit. Contacts proteins S8 and S17. May interact with IF1 in the 30S initiation complex.

Functionally, with S4 and S5 plays an important role in translational accuracy. In terms of biological role, interacts with and stabilizes bases of the 16S rRNA that are involved in tRNA selection in the A site and with the mRNA backbone. Located at the interface of the 30S and 50S subunits, it traverses the body of the 30S subunit contacting proteins on the other side and probably holding the rRNA structure together. The combined cluster of proteins S8, S12 and S17 appears to hold together the shoulder and platform of the 30S subunit. In Clostridium kluyveri (strain ATCC 8527 / DSM 555 / NBRC 12016 / NCIMB 10680 / K1), this protein is Small ribosomal subunit protein uS12.